The following is a 334-amino-acid chain: Mevalonate kinase (334 aa).

110-120 contributes to the ATP binding site; sequence PVGAGLGSSAA. Asp-161 acts as the Proton acceptor in catalysis.

It belongs to the GHMP kinase family. Mevalonate kinase subfamily. As to quaternary structure, homodimer. It depends on Mg(2+) as a cofactor.

It is found in the cytoplasm. It catalyses the reaction (R)-mevalonate + ATP = (R)-5-phosphomevalonate + ADP + H(+). The protein operates within isoprenoid biosynthesis; isopentenyl diphosphate biosynthesis via mevalonate pathway; isopentenyl diphosphate from (R)-mevalonate: step 1/3. Catalyzes the phosphorylation of (R)-mevalonate (MVA) to (R)-mevalonate 5-phosphate (MVAP). Functions in the mevalonate (MVA) pathway leading to isopentenyl diphosphate (IPP), a key precursor for the biosynthesis of isoprenoid compounds such as archaeal membrane lipids. The polypeptide is Mevalonate kinase (Thermococcus gammatolerans (strain DSM 15229 / JCM 11827 / EJ3)).